We begin with the raw amino-acid sequence, 336 residues long: Dihydroorotate dehydrogenase (quinone) (336 aa).

FMN-binding positions include alanine 62 to lysine 66 and threonine 86. Lysine 66 is a binding site for substrate. A substrate-binding site is contributed by asparagine 111–phenylalanine 115. FMN-binding residues include asparagine 139 and asparagine 172. Substrate is bound at residue asparagine 172. The Nucleophile role is filled by serine 175. Residue asparagine 177 coordinates substrate. Positions 217 and 245 each coordinate FMN. Residue asparagine 246–threonine 247 participates in substrate binding. Residues glycine 268, glycine 297, and tyrosine 318–serine 319 contribute to the FMN site.

This sequence belongs to the dihydroorotate dehydrogenase family. Type 2 subfamily. Monomer. FMN serves as cofactor.

The protein localises to the cell membrane. It carries out the reaction (S)-dihydroorotate + a quinone = orotate + a quinol. It functions in the pathway pyrimidine metabolism; UMP biosynthesis via de novo pathway; orotate from (S)-dihydroorotate (quinone route): step 1/1. In terms of biological role, catalyzes the conversion of dihydroorotate to orotate with quinone as electron acceptor. The polypeptide is Dihydroorotate dehydrogenase (quinone) (Proteus mirabilis (strain HI4320)).